The sequence spans 447 residues: Serine/threonine-protein phosphatase 2A 55 kDa regulatory subunit B alpha isoform (447 aa).

A2 carries the post-translational modification N-acetylalanine. WD repeat units follow at residues 11–80, 94–174, 175–218, 227–270, 288–325, 347–381, and 414–446; these read QWCF…FQSH, EKIN…IFAN, AHTY…VDIK, EVIT…KLFE, ISDV…TYQV, ECCW…TLEA, and DFNK…QDKV.

This sequence belongs to the phosphatase 2A regulatory subunit B family. In terms of assembly, PP2A consists of a common heterodimeric core enzyme, composed of a 36 kDa catalytic subunit (subunit C) and a 65 kDa constant regulatory subunit (PR65 or subunit A), that associates with a variety of regulatory subunits. Proteins that associate with the core dimer include three families of regulatory subunits B (the R2/B/PR55/B55, R3/B''/PR72/PR130/PR59 and R5/B'/B56 families), the 48 kDa variable regulatory subunit, viral proteins, and cell signaling molecules. Interacts with the PP2A C catalytic subunit PPP2CA. Interacts with the PP2A A subunit PPP2R1A. Interacts with TP53. Interacts with IER5. Interacts with MFHAS1; the interaction is direct. Interacts with PABIR1/FAM122A (via its N-terminus); the interaction is direct and inhibits PP2A activity. Interacts with ARPP19; the interaction is direct and inhibits PP2A activity. Interacts with CRTC3. In terms of tissue distribution, expressed in all tissues examined.

In terms of biological role, substrate-recognition subunit of protein phosphatase 2A (PP2A) that plays a key role in cell cycle by controlling mitosis entry and exit. Involved in chromosome clustering during late mitosis by mediating dephosphorylation of MKI67. Essential for serine/threonine-protein phosphatase 2A-mediated dephosphorylation of WEE1, preventing its ubiquitin-mediated proteolysis, increasing WEE1 protein levels, and promoting the G2/M checkpoint. This is Serine/threonine-protein phosphatase 2A 55 kDa regulatory subunit B alpha isoform (PPP2R2A) from Homo sapiens (Human).